Here is a 339-residue protein sequence, read N- to C-terminus: Methylthioribose-1-phosphate isomerase (339 aa).

Substrate is bound by residues 50–52 (RGA), arginine 84, and glutamine 186. Catalysis depends on aspartate 227, which acts as the Proton donor. 237–238 (NK) is a substrate binding site.

Belongs to the eIF-2B alpha/beta/delta subunits family. MtnA subfamily.

It carries out the reaction 5-(methylsulfanyl)-alpha-D-ribose 1-phosphate = 5-(methylsulfanyl)-D-ribulose 1-phosphate. The protein operates within amino-acid biosynthesis; L-methionine biosynthesis via salvage pathway; L-methionine from S-methyl-5-thio-alpha-D-ribose 1-phosphate: step 1/6. In terms of biological role, catalyzes the interconversion of methylthioribose-1-phosphate (MTR-1-P) into methylthioribulose-1-phosphate (MTRu-1-P). This Sulfurihydrogenibium sp. (strain YO3AOP1) protein is Methylthioribose-1-phosphate isomerase.